The chain runs to 81 residues: Beta-toxin Ct13 (81 aa).

Residues 1 to 18 (MKVLILIIASVLLIGVEC) form the signal peptide. In terms of domain architecture, LCN-type CS-alpha/beta spans 19-78 (KDGFPVDSEGCILLPCATRAYCSVNCKFMKGSGGSCDTLACHCKGLPEDAKVQDKPTNKC). 4 cysteine pairs are disulfide-bonded: cysteine 29–cysteine 78, cysteine 34–cysteine 54, cysteine 40–cysteine 59, and cysteine 44–cysteine 61. At cysteine 78 the chain carries Cysteine amide.

It belongs to the long (4 C-C) scorpion toxin superfamily. Sodium channel inhibitor family. Beta subfamily. In terms of tissue distribution, expressed by the venom gland.

The protein localises to the secreted. In terms of biological role, beta toxins bind voltage-independently at site-4 of sodium channels (Nav) and shift the voltage of activation toward more negative potentials thereby affecting sodium channel activation and promoting spontaneous and repetitive firing. This is Beta-toxin Ct13 from Centruroides tecomanus (Scorpion).